A 253-amino-acid polypeptide reads, in one-letter code: Chromosome-partitioning ATPase Soj (253 aa).

ATP contacts are provided by lysine 11, glycine 12, glycine 13, valine 14, glycine 15, lysine 16, threonine 17, threonine 18, proline 211, and asparagine 213. Residue threonine 17 coordinates Mg(2+).

It belongs to the ParA family.

The enzyme catalyses ATP + H2O = ADP + phosphate + H(+). ATPase probably involved in chromosome partitioning. Cooperatively binds dsDNA, forming nucleoprotein filaments in a strictly ATP-dependent fashion. This is Chromosome-partitioning ATPase Soj from Treponema pallidum (strain Nichols).